Here is a 286-residue protein sequence, read N- to C-terminus: uncharacterized protein (286 aa).

The Radical SAM core domain occupies 2–221 (VDGMKHLILK…PIYIKNLQKR (220 aa)). [4Fe-4S] cluster-binding residues include C16, C20, and C23.

It belongs to the radical SAM superfamily. Anaerobic sulfatase-maturating enzyme family. The cofactor is [4Fe-4S] cluster.

This is an uncharacterized protein from Methanocaldococcus jannaschii (strain ATCC 43067 / DSM 2661 / JAL-1 / JCM 10045 / NBRC 100440) (Methanococcus jannaschii).